Reading from the N-terminus, the 112-residue chain is Photosystem II reaction center Psb28 protein (112 aa).

It belongs to the Psb28 family. As to quaternary structure, part of the photosystem II complex.

The protein localises to the cellular thylakoid membrane. The sequence is that of Photosystem II reaction center Psb28 protein from Microcystis aeruginosa (strain NIES-843 / IAM M-2473).